The primary structure comprises 454 residues: Mitochondrial dynamics protein MID49 (454 aa).

The Mitochondrial intermembrane segment spans residues 1–22; sequence MAEFSQKRGKRRSDEGLGSMVD. A Phosphoserine modification is found at Ser-13. Residues 23-43 traverse the membrane as a helical segment; the sequence is FLLANARLVLGVGGAAVLGIA. The Cytoplasmic segment spans residues 44 to 454; it reads TLAVKRFIDR…SGLQEPEGLL (411 aa). Residues 76–119 form a disordered region; sequence ATPHLQPRPPPAALSQPVLPLAPSSSAPEGPAETDPEVTPQLSS. Over residues 88–103 the composition is skewed to low complexity; the sequence is ALSQPVLPLAPSSSAP.

Belongs to the MID49/MID51 family. In terms of assembly, interacts with DNM1L. As to expression, expressed in all tissues tested with highest expression in heart and skeletal muscle.

The protein localises to the mitochondrion outer membrane. In terms of biological role, mitochondrial outer membrane protein involved in the regulation of mitochondrial organization. It is required for mitochondrial fission and promotes the recruitment and association of the fission mediator dynamin-related protein 1 (DNM1L) to the mitochondrial surface independently of the mitochondrial fission FIS1 and MFF proteins. Regulates DNM1L GTPase activity. This Homo sapiens (Human) protein is Mitochondrial dynamics protein MID49 (MIEF2).